The primary structure comprises 998 residues: Bifunctional glutamine synthetase adenylyltransferase/adenylyl-removing enzyme (998 aa).

Residues 1–487 are adenylyl removase; it reads MVVTKPATQR…LHAKLFYQPL (487 aa). Residues 492–998 form an adenylyl transferase region; the sequence is GPAGLEIRHG…KAVVCKVFGS (507 aa).

It belongs to the GlnE family. Requires Mg(2+) as cofactor.

The enzyme catalyses [glutamine synthetase]-O(4)-(5'-adenylyl)-L-tyrosine + phosphate = [glutamine synthetase]-L-tyrosine + ADP. It carries out the reaction [glutamine synthetase]-L-tyrosine + ATP = [glutamine synthetase]-O(4)-(5'-adenylyl)-L-tyrosine + diphosphate. Functionally, involved in the regulation of glutamine synthetase GlnA, a key enzyme in the process to assimilate ammonia. When cellular nitrogen levels are high, the C-terminal adenylyl transferase (AT) inactivates GlnA by covalent transfer of an adenylyl group from ATP to specific tyrosine residue of GlnA, thus reducing its activity. Conversely, when nitrogen levels are low, the N-terminal adenylyl removase (AR) activates GlnA by removing the adenylyl group by phosphorolysis, increasing its activity. The regulatory region of GlnE binds the signal transduction protein PII (GlnB) which indicates the nitrogen status of the cell. The chain is Bifunctional glutamine synthetase adenylyltransferase/adenylyl-removing enzyme from Mycolicibacterium paratuberculosis (strain ATCC BAA-968 / K-10) (Mycobacterium paratuberculosis).